A 332-amino-acid chain; its full sequence is 2,3-diketo-L-gulonate reductase (332 aa).

H44 acts as the Proton donor in catalysis. Residues I168–S174, W224–K225, and G304–E306 each bind NAD(+).

This sequence belongs to the LDH2/MDH2 oxidoreductase family. DlgD subfamily. As to quaternary structure, homodimer.

The protein resides in the cytoplasm. It carries out the reaction 3-dehydro-L-gulonate + NAD(+) = 2,3-dioxo-L-gulonate + NADH + H(+). The catalysed reaction is 3-dehydro-L-gulonate + NADP(+) = 2,3-dioxo-L-gulonate + NADPH + H(+). In terms of biological role, catalyzes the reduction of 2,3-diketo-L-gulonate in the presence of NADH, to form 3-keto-L-gulonate. The chain is 2,3-diketo-L-gulonate reductase from Escherichia coli O139:H28 (strain E24377A / ETEC).